Consider the following 155-residue polypeptide: Aspartate 1-decarboxylase (155 aa).

S24 acts as the Schiff-base intermediate with substrate; via pyruvic acid in catalysis. Pyruvic acid (Ser) is present on S24. T56 serves as a coordination point for substrate. Y57 serves as the catalytic Proton donor. 72-74 (GAA) is a binding site for substrate.

It belongs to the PanD family. As to quaternary structure, heterooctamer of four alpha and four beta subunits. The cofactor is pyruvate. In terms of processing, is synthesized initially as an inactive proenzyme, which is activated by self-cleavage at a specific serine bond to produce a beta-subunit with a hydroxyl group at its C-terminus and an alpha-subunit with a pyruvoyl group at its N-terminus.

It localises to the cytoplasm. It carries out the reaction L-aspartate + H(+) = beta-alanine + CO2. Its pathway is cofactor biosynthesis; (R)-pantothenate biosynthesis; beta-alanine from L-aspartate: step 1/1. Catalyzes the pyruvoyl-dependent decarboxylation of aspartate to produce beta-alanine. This is Aspartate 1-decarboxylase from Methylocella silvestris (strain DSM 15510 / CIP 108128 / LMG 27833 / NCIMB 13906 / BL2).